Reading from the N-terminus, the 732-residue chain is Acylamino-acid-releasing enzyme (732 aa).

An N-acetylmethionine modification is found at M1. Residues S185 and S187 each carry the phosphoserine modification. Active-site charge relay system residues include S587, D675, and H707.

As to quaternary structure, homotetramer. Expressed in erythrocytes (at protein level).

The protein resides in the cytoplasm. It carries out the reaction Cleavage of an N-acetyl or N-formyl amino acid from the N-terminus of a polypeptide.. Its activity is regulated as follows. Homotetramerization is required for activity. Tetramerization results in the formation of a gated channel which is involved in substrate selection and substrate access to the catalytic sites. Functionally, this enzyme catalyzes the hydrolysis of the N-terminal peptide bond of an N-acetylated peptide to generate an N-acetylated amino acid and a peptide with a free N-terminus. It preferentially cleaves off Ac-Ala, Ac-Met and Ac-Ser. Also, involved in the degradation of oxidized and glycated proteins. The protein is Acylamino-acid-releasing enzyme (APEH) of Homo sapiens (Human).